A 200-amino-acid polypeptide reads, in one-letter code: Riboflavin kinase (200 aa).

The interval 1 to 20 is disordered; that stretch reads MATARPSIVGPDSGPESPFP. Residues Thr42 and Asn44 each contribute to the Mg(2+) site. Glu110 serves as the catalytic Nucleophile.

This sequence belongs to the flavokinase family. Requires Zn(2+) as cofactor. Mg(2+) is required as a cofactor.

It catalyses the reaction riboflavin + ATP = FMN + ADP + H(+). It participates in cofactor biosynthesis; FMN biosynthesis; FMN from riboflavin (ATP route): step 1/1. In terms of biological role, catalyzes the phosphorylation of riboflavin (vitamin B2) to form flavin mononucleotide (FMN) coenzyme. This is Riboflavin kinase (FMN1) from Pyricularia oryzae (strain 70-15 / ATCC MYA-4617 / FGSC 8958) (Rice blast fungus).